Reading from the N-terminus, the 599-residue chain is E3 ubiquitin-protein ligase Kcmf1 (599 aa).

A ZZ-type zinc finger spans residues His-4–Asp-60. 8 residues coordinate Zn(2+): Cys-9, Cys-12, Cys-24, Cys-27, Cys-33, Cys-36, His-46, and His-50. The C2H2-type zinc-finger motif lies at Phe-78–His-101. 5 disordered regions span residues His-155–Arg-193, Asp-229–Ser-253, Gly-269–Thr-294, Val-466–Met-486, and Asn-507–Arg-599. 2 stretches are compositionally biased toward low complexity: residues Arg-160–Pro-170 and Ser-180–Gly-192. Residues Gly-269–Gly-285 are compositionally biased toward gly residues. Positions Gly-513–Gly-532 are enriched in gly residues. Positions Thr-538–Ser-547 are enriched in basic and acidic residues. A compositionally biased stretch (low complexity) spans Ser-559–Asn-593.

It belongs to the KCMF1 family. Interacts with poe.

It carries out the reaction S-ubiquitinyl-[E2 ubiquitin-conjugating enzyme]-L-cysteine + [acceptor protein]-L-lysine = [E2 ubiquitin-conjugating enzyme]-L-cysteine + N(6)-ubiquitinyl-[acceptor protein]-L-lysine.. In terms of biological role, has intrinsic E3 ubiquitin ligase activity and promotes ubiquitination. Involved in the negative regulation of the Ras/MAPK signaling pathway in the wing by acting with the E2 enzyme Unc6 and the putative E3 ligases poe and Ufd4 to mediate the ubiquitination and proteasomal degradation of rl/MAPK. The sequence is that of E3 ubiquitin-protein ligase Kcmf1 from Drosophila melanogaster (Fruit fly).